The sequence spans 413 residues: Serine hydroxymethyltransferase (413 aa).

Residues Leu119 and 123–125 (GHL) contribute to the (6S)-5,6,7,8-tetrahydrofolate site. Lys228 carries the N6-(pyridoxal phosphate)lysine modification. Glu243 contributes to the (6S)-5,6,7,8-tetrahydrofolate binding site.

The protein belongs to the SHMT family. As to quaternary structure, homodimer. Pyridoxal 5'-phosphate serves as cofactor.

Its subcellular location is the cytoplasm. It carries out the reaction (6R)-5,10-methylene-5,6,7,8-tetrahydrofolate + glycine + H2O = (6S)-5,6,7,8-tetrahydrofolate + L-serine. The protein operates within one-carbon metabolism; tetrahydrofolate interconversion. Its pathway is amino-acid biosynthesis; glycine biosynthesis; glycine from L-serine: step 1/1. Catalyzes the reversible interconversion of serine and glycine with tetrahydrofolate (THF) serving as the one-carbon carrier. This reaction serves as the major source of one-carbon groups required for the biosynthesis of purines, thymidylate, methionine, and other important biomolecules. Also exhibits THF-independent aldolase activity toward beta-hydroxyamino acids, producing glycine and aldehydes, via a retro-aldol mechanism. The chain is Serine hydroxymethyltransferase from Thermoanaerobacter pseudethanolicus (strain ATCC 33223 / 39E) (Clostridium thermohydrosulfuricum).